A 96-amino-acid chain; its full sequence is uncharacterized protein (96 aa).

Helical transmembrane passes span 27–47 (LYTVNDFIIGAMFLVGSFFFF) and 52–72 (MSAGIWLFAIGSLLLLIRPTI).

Its subcellular location is the cell membrane. This is an uncharacterized protein from Bacillus subtilis (strain 168).